We begin with the raw amino-acid sequence, 557 residues long: NAC domain-containing protein 17 (557 aa).

An NAC domain is found at 16 to 166; the sequence is SAPGFRFHPT…YYALYKLFKK (151 aa). The DNA-binding element occupies 115 to 172; the sequence is VGLKKTLVFYRGRAPSGERTDWVMHEYTMDEDELGRCKNPQEYYALYKLFKKSGAGPK. Residues 526–546 traverse the membrane as a helical segment; it reads FLLLSIVGALCAIFWVLVATV.

As to expression, expressed in roots, rosette leaves, cauline leaves, shoot apex, stems and flowers.

It localises to the endoplasmic reticulum membrane. Its subcellular location is the nucleus. In terms of biological role, transcriptional activator activated by proteolytic cleavage through regulated intramembrane proteolysis (RIP). Transcriptional activator that acts as a positive regulator of AOX1A during mitochondrial dysfunction. Binds directly to AOX1A promoter. Mediates mitochondrial retrograde signaling. This chain is NAC domain-containing protein 17, found in Arabidopsis thaliana (Mouse-ear cress).